The following is a 71-amino-acid chain: UPF0352 protein Swoo_2786 (71 aa).

The protein belongs to the UPF0352 family.

The sequence is that of UPF0352 protein Swoo_2786 from Shewanella woodyi (strain ATCC 51908 / MS32).